A 420-amino-acid chain; its full sequence is Mannose-1-phosphate guanylyltransferase regulatory subunit alpha (420 aa).

Positions 2-251 are substrate-binding domain; the sequence is LKAVILIGGP…DGIWSQIKSA (250 aa). 2 residues coordinate GDP-alpha-D-mannose: E85 and Q247. The tract at residues 273-420 is hexapeptide repeat domain; the sequence is LAKHTPGGPW…SRSFTNQIIL (148 aa). The C-loop stretch occupies residues 356–384; that stretch reads TPSDPNPNDPRARMDSESLFKDGKLLPAI.

This sequence belongs to the transferase hexapeptide repeat family. In terms of assembly, component of the GMPPA-GMPPB mannose-1-phosphate guanylyltransferase complex composed of 4 GMPPA subunits and 8 GMPPB subunits; the complex is organized into three layers, a central layer made up of 2 GMPPA dimers sandwiched between two layers each made up of 2 GMPPB dimers. Expressed in fibroblasts (at protein level).

The protein localises to the cytoplasm. Functionally, regulatory subunit of the GMPPA-GMPPB mannose-1-phosphate guanylyltransferase complex; reduces the catalytic activity of GMPPB when part of the complex. Mediates allosteric feedback inhibition of GMPPB catalytic activity upon binding GDP-alpha-D-mannose. Together with GMPPB regulates GDP-alpha-D-mannose levels. This chain is Mannose-1-phosphate guanylyltransferase regulatory subunit alpha, found in Homo sapiens (Human).